The following is a 373-amino-acid chain: 8-amino-7-oxononanoate synthase (373 aa).

Substrate is bound at residue R16. 93 to 94 (GF) contributes to the pyridoxal 5'-phosphate binding site. H118 contributes to the substrate binding site. Pyridoxal 5'-phosphate contacts are provided by residues S165, 190-193 (DEAH), and 222-225 (TFSK). At K225 the chain carries N6-(pyridoxal phosphate)lysine. Residue T334 participates in substrate binding.

This sequence belongs to the class-II pyridoxal-phosphate-dependent aminotransferase family. BioF subfamily. As to quaternary structure, homodimer. The cofactor is pyridoxal 5'-phosphate.

The catalysed reaction is 6-carboxyhexanoyl-[ACP] + L-alanine + H(+) = (8S)-8-amino-7-oxononanoate + holo-[ACP] + CO2. Its pathway is cofactor biosynthesis; biotin biosynthesis. In terms of biological role, catalyzes the decarboxylative condensation of pimeloyl-[acyl-carrier protein] and L-alanine to produce 8-amino-7-oxononanoate (AON), [acyl-carrier protein], and carbon dioxide. This Helicobacter pylori (strain ATCC 700392 / 26695) (Campylobacter pylori) protein is 8-amino-7-oxononanoate synthase.